Here is a 228-residue protein sequence, read N- to C-terminus: Apoptosis regulator R1 (228 aa).

Residues 1–21 (LNPKKKENNGVKNGDREKQHE) show a composition bias toward basic and acidic residues. A disordered region spans residues 1–29 (LNPKKKENNGVKNGDREKQHETGNTIFRG). A BH1 motif is present at residues 120–139 (SLFQGGVNWGRIVAFFVFGA). A BH2 motif is present at residues 171–186 (DWIQSNGGWNGFLTLY). The chain crosses the membrane as a helical span at residues 207–227 (TVLTGAVALGALMTVGALFAS).

This sequence belongs to the Bcl-2 family.

It is found in the membrane. Functionally, could be the homolog of mammalian Bcl-W. The chain is Apoptosis regulator R1 from Xenopus laevis (African clawed frog).